Consider the following 244-residue polypeptide: Small ribosomal subunit protein uS2 (244 aa).

This sequence belongs to the universal ribosomal protein uS2 family.

The sequence is that of Small ribosomal subunit protein uS2 from Buchnera aphidicola subsp. Acyrthosiphon pisum (strain 5A).